Consider the following 165-residue polypeptide: Hydroxyproline-rich systemin A (165 aa).

The first 18 residues, 1–18, serve as a signal peptide directing secretion; the sequence is MRVLFLIYLILSPFGAEA. The propeptide occupies 19–35; sequence RTLLENHEGLNVGSGYG. Disordered stretches follow at residues 33-70 and 142-165; these read GYGRGANLPPPSPASSPPSKEVSNSVSPTRTDEKTSEN and YWNRKPLSPPSPKPADGQRPLHSY. A 4-hydroxyproline mark is found at Pro-42, Pro-43, Pro-45, Pro-49, and Pro-50. O-linked (Ara...) hydroxyproline glycosylation is found at Pro-42, Pro-43, Pro-45, Pro-49, and Pro-50. The propeptide occupies 54-143; the sequence is VSNSVSPTRT…FDSKSDERYW (90 aa). A 4-hydroxyproline mark is found at Pro-150, Pro-151, and Pro-153. Pro-150, Pro-151, and Pro-153 each carry an O-linked (Ara...) hydroxyproline glycan. A propeptide spanning residues 162 to 165 is cleaved from the precursor; that stretch reads LHSY.

In terms of processing, O-glycosylated; contains pentose side chains. Expressed in leaves.

Its subcellular location is the secreted. Functionally, activates a lipid-based signal transduction pathway in which linolenic acid is converted to jasmonic acid, a potent activator of defense gene transcription, including proteinase inhibitors. The protein is Hydroxyproline-rich systemin A of Nicotiana tabacum (Common tobacco).